Consider the following 495-residue polypeptide: GTPase Der (495 aa).

An EngA-type G 1 domain is found at 3-178 (AKIALVGRPN…EMRDLLPEED (176 aa)). GTP is bound by residues 9-16 (GRPNVGKS), 57-61 (DTGGI), and 130-133 (NKVD). The segment at 190–227 (TAVASADADVDADVETEGGTSASETEEGITEETVEDEP) is disordered. The span at 213 to 227 (ETEEGITEETVEDEP) shows a compositional bias: acidic residues. Positions 231–404 (LRLCMLGRPN…LAARIRRECS (174 aa)) constitute an EngA-type G 2 domain. Residues 237–244 (GRPNAGKS), 284–288 (DTAGV), and 349–352 (NKMD) contribute to the GTP site. One can recognise a KH-like domain in the interval 405–489 (VRIPTGQLNR…PMRVHFRSSH (85 aa)).

It belongs to the TRAFAC class TrmE-Era-EngA-EngB-Septin-like GTPase superfamily. EngA (Der) GTPase family. As to quaternary structure, associates with the 50S ribosomal subunit.

Functionally, GTPase that plays an essential role in the late steps of ribosome biogenesis. This is GTPase Der from Nitratidesulfovibrio vulgaris (strain DP4) (Desulfovibrio vulgaris).